The following is a 473-amino-acid chain: 3-isopropylmalate dehydratase large subunit (473 aa).

Positions 348, 408, and 411 each coordinate [4Fe-4S] cluster.

Belongs to the aconitase/IPM isomerase family. LeuC type 1 subfamily. In terms of assembly, heterodimer of LeuC and LeuD. [4Fe-4S] cluster is required as a cofactor.

It catalyses the reaction (2R,3S)-3-isopropylmalate = (2S)-2-isopropylmalate. The protein operates within amino-acid biosynthesis; L-leucine biosynthesis; L-leucine from 3-methyl-2-oxobutanoate: step 2/4. Catalyzes the isomerization between 2-isopropylmalate and 3-isopropylmalate, via the formation of 2-isopropylmaleate. This chain is 3-isopropylmalate dehydratase large subunit, found in Haloarcula marismortui (strain ATCC 43049 / DSM 3752 / JCM 8966 / VKM B-1809) (Halobacterium marismortui).